We begin with the raw amino-acid sequence, 205 residues long: Holliday junction branch migration complex subunit RuvA (205 aa).

The domain I stretch occupies residues 1-64; that stretch reads MIGKLKGSIE…EDQLKLFGFV (64 aa). Positions 65–143 are domain II; it reads SALEREWFNL…AFAGDASASI (79 aa). Residues 144 to 153 form a flexible linker region; sequence GLKQELGEGV. The tract at residues 153–205 is domain III; it reads VASAPVADAVSALTNLGYSRDQAANAVAAALKNGGEGGDSAKLIRLGLKELSR.

Belongs to the RuvA family. In terms of assembly, homotetramer. Forms an RuvA(8)-RuvB(12)-Holliday junction (HJ) complex. HJ DNA is sandwiched between 2 RuvA tetramers; dsDNA enters through RuvA and exits via RuvB. An RuvB hexamer assembles on each DNA strand where it exits the tetramer. Each RuvB hexamer is contacted by two RuvA subunits (via domain III) on 2 adjacent RuvB subunits; this complex drives branch migration. In the full resolvosome a probable DNA-RuvA(4)-RuvB(12)-RuvC(2) complex forms which resolves the HJ.

The protein resides in the cytoplasm. Functionally, the RuvA-RuvB-RuvC complex processes Holliday junction (HJ) DNA during genetic recombination and DNA repair, while the RuvA-RuvB complex plays an important role in the rescue of blocked DNA replication forks via replication fork reversal (RFR). RuvA specifically binds to HJ cruciform DNA, conferring on it an open structure. The RuvB hexamer acts as an ATP-dependent pump, pulling dsDNA into and through the RuvAB complex. HJ branch migration allows RuvC to scan DNA until it finds its consensus sequence, where it cleaves and resolves the cruciform DNA. In Agrobacterium fabrum (strain C58 / ATCC 33970) (Agrobacterium tumefaciens (strain C58)), this protein is Holliday junction branch migration complex subunit RuvA.